The chain runs to 591 residues: Guanylate-binding protein 2 (591 aa).

Residues 1–309 (MAPEINLPGP…NAISSGDLPC (309 aa)) are GTPase domain (Globular). The GB1/RHD3-type G domain occupies 35–276 (TQPVVVVAIV…FCSYILSHSN (242 aa)). Residues 45–52 (GLYRTGKS), 181–182 (RD), and leucine 245 contribute to the GTP site. Cysteine 588 bears the Cysteine methyl ester mark. Residue cysteine 588 is the site of S-geranylgeranyl cysteine attachment. Positions 589 to 591 (NIL) are cleaved as a propeptide — removed in mature form.

This sequence belongs to the TRAFAC class dynamin-like GTPase superfamily. GB1/RHD3 GTPase family. GB1 subfamily. Homodimer; homodimerization occurs upon GTP-binding and is required for the association with membranous structures. Heterodimer with other family members, including GBP1, GBP3, GBP4 and GBP5. Post-translationally, (Microbial infection) Ubiquitinated by S.flexneri IpaH9.8, leading to its degradation by the proteasome, thereby preventing its ability to promote host defense against bacterial infection. Isoprenylation is required for proper subcellular location.

The protein resides in the cytoplasmic vesicle membrane. It localises to the golgi apparatus membrane. Its subcellular location is the cytoplasm. The protein localises to the perinuclear region. It catalyses the reaction GTP + H2O = GDP + phosphate + H(+). Interferon (IFN)-inducible GTPase that plays important roles in innate immunity against a diverse range of bacterial, viral and protozoan pathogens. Hydrolyzes GTP to GMP in 2 consecutive cleavage reactions, but the major reaction product is GDP. Following infection, recruited to the pathogen-containing vacuoles or vacuole-escaped bacteria and acts as a positive regulator of inflammasome assembly by promoting the release of inflammasome ligands from bacteria. Acts by promoting lysis of pathogen-containing vacuoles, releasing pathogens into the cytosol. Following pathogen release in the cytosol, promotes recruitment of proteins that mediate bacterial cytolysis: this liberates ligands that are detected by inflammasomes, such as lipopolysaccharide (LPS) that activates the non-canonical CASP4/CASP11 inflammasome or double-stranded DNA (dsDNA) that activates the AIM2 inflammasome. Confers protection to the protozoan pathogen Toxoplasma gondii. Independently of its GTPase activity, acts as an inhibitor of various viruses infectivity, such as HIV-1, Zika and influenza A viruses, by inhibiting FURIN-mediated maturation of viral envelope proteins. The polypeptide is Guanylate-binding protein 2 (Homo sapiens (Human)).